Here is a 192-residue protein sequence, read N- to C-terminus: Thymidylate kinase (192 aa).

Residue 7-14 (GIDCVGKS) coordinates ATP.

This sequence belongs to the thymidylate kinase family.

It carries out the reaction dTMP + ATP = dTDP + ADP. Functionally, phosphorylation of dTMP to form dTDP in both de novo and salvage pathways of dTTP synthesis. This is Thymidylate kinase (tmk) from Campylobacter jejuni subsp. jejuni serotype O:2 (strain ATCC 700819 / NCTC 11168).